Consider the following 295-residue polypeptide: Nucleotide-binding protein BH3569 (295 aa).

Position 14-21 (14-21 (GMSGAGKT)) interacts with ATP. Residue 65 to 68 (DLRG) participates in GTP binding.

Belongs to the RapZ-like family.

Displays ATPase and GTPase activities. This is Nucleotide-binding protein BH3569 from Halalkalibacterium halodurans (strain ATCC BAA-125 / DSM 18197 / FERM 7344 / JCM 9153 / C-125) (Bacillus halodurans).